A 149-amino-acid polypeptide reads, in one-letter code: Ribonuclease P protein component (149 aa).

The interval 123–149 (GTKVSRRSNGALHDAAPSSQPDPTVSG) is disordered. Residues 139 to 149 (PSSQPDPTVSG) show a composition bias toward polar residues.

This sequence belongs to the RnpA family. Consists of a catalytic RNA component (M1 or rnpB) and a protein subunit.

The enzyme catalyses Endonucleolytic cleavage of RNA, removing 5'-extranucleotides from tRNA precursor.. RNaseP catalyzes the removal of the 5'-leader sequence from pre-tRNA to produce the mature 5'-terminus. It can also cleave other RNA substrates such as 4.5S RNA. The protein component plays an auxiliary but essential role in vivo by binding to the 5'-leader sequence and broadening the substrate specificity of the ribozyme. The sequence is that of Ribonuclease P protein component from Caulobacter vibrioides (strain ATCC 19089 / CIP 103742 / CB 15) (Caulobacter crescentus).